The chain runs to 385 residues: DNA replication and repair protein RecF (385 aa).

30-37 is a binding site for ATP; it reads GPNGNGKT.

This sequence belongs to the RecF family.

It localises to the cytoplasm. Its function is as follows. The RecF protein is involved in DNA metabolism; it is required for DNA replication and normal SOS inducibility. RecF binds preferentially to single-stranded, linear DNA. It also seems to bind ATP. The polypeptide is DNA replication and repair protein RecF (Mycobacterium leprae (strain Br4923)).